A 384-amino-acid chain; its full sequence is MTDALTITRDLIRCPSVTPADAGALGVLEALLKQAGFTTHRVTFSEPGTADIDNLYARIGTEGPHITFAGHTDVVPPGDEASWSLPAFSGEVKDGYIYGRGAVDMKGGIACSVAAALDYLRDHGSQPKGSISFLITGDEEDVSINGTIKLLQWAADRGETFDHCVLGEPSNQEVMGDCIKIGRRGSQSGTLIVEGKQGHVAYPHRASNPVPDISRLIVALSDEPLDNGSAQFQPSNLEFTTVDVGNTATNVIAGIARAKFNIRYNDCHTQESLRALVEQRLAKACGNRIRAHIDWLPSNSDVFLTKPGPFTDLAVAAIEEVTGRKPELSTTGGTSDARFISSYCPVIEFGLVGQTMHQIDERASVADIATLTKIYRGILDRYFA.

A Zn(2+)-binding site is contributed by H71. Residue D73 is part of the active site. D104 is a Zn(2+) binding site. Residue E139 is the Proton acceptor of the active site. E140, E168, and H357 together coordinate Zn(2+).

It belongs to the peptidase M20A family. DapE subfamily. As to quaternary structure, homodimer. Zn(2+) is required as a cofactor. The cofactor is Co(2+).

The catalysed reaction is N-succinyl-(2S,6S)-2,6-diaminopimelate + H2O = (2S,6S)-2,6-diaminopimelate + succinate. It functions in the pathway amino-acid biosynthesis; L-lysine biosynthesis via DAP pathway; LL-2,6-diaminopimelate from (S)-tetrahydrodipicolinate (succinylase route): step 3/3. Its function is as follows. Catalyzes the hydrolysis of N-succinyl-L,L-diaminopimelic acid (SDAP), forming succinate and LL-2,6-diaminopimelate (DAP), an intermediate involved in the bacterial biosynthesis of lysine and meso-diaminopimelic acid, an essential component of bacterial cell walls. The chain is Succinyl-diaminopimelate desuccinylase from Bradyrhizobium sp. (strain ORS 278).